Consider the following 522-residue polypeptide: Involucrin (522 aa).

A compositionally biased stretch (polar residues) spans M1–L15. Disordered stretches follow at residues M1–E126, Q159–Q329, and Q366–L496. A compositionally biased stretch (low complexity) spans E76–H91. The segment covering W92–E126 has biased composition (basic and acidic residues). The segment covering Q169–G181 has biased composition (low complexity). Basic and acidic residues-rich tracts occupy residues Q182–Q198, K214–G231, Q252–E264, K274–E290, and Q305–L323. Residues Q375 to Q389 are compositionally biased toward low complexity. 3 stretches are compositionally biased toward basic and acidic residues: residues K391 to E401, Q409 to A418, and K431 to Q465. A compositionally biased stretch (low complexity) spans Q466–Q479.

It belongs to the involucrin family. In terms of assembly, directly or indirectly cross-linked to cornifelin (CNFN). Post-translationally, substrate of transglutaminase. Specific glutamines or lysines are cross-linked to keratins, desmoplakin and to inter involucrin molecules. Keratinocytes of epidermis and other stratified squamous epithelia.

Its subcellular location is the cytoplasm. Its function is as follows. Part of the insoluble cornified cell envelope (CE) of stratified squamous epithelia. The chain is Involucrin (IVL) from Hylobates lar (Lar gibbon).